The following is a 209-amino-acid chain: Uracil phosphoribosyltransferase (209 aa).

5-phospho-alpha-D-ribose 1-diphosphate is bound by residues Arg-79, Arg-104, and 131-139; that span reads DPMLATGGS. Uracil-binding positions include Ile-194 and 199 to 201; that span reads GDA. Residue Asp-200 coordinates 5-phospho-alpha-D-ribose 1-diphosphate.

This sequence belongs to the UPRTase family. Requires Mg(2+) as cofactor.

It catalyses the reaction UMP + diphosphate = 5-phospho-alpha-D-ribose 1-diphosphate + uracil. Its pathway is pyrimidine metabolism; UMP biosynthesis via salvage pathway; UMP from uracil: step 1/1. With respect to regulation, allosterically activated by GTP. Its function is as follows. Catalyzes the conversion of uracil and 5-phospho-alpha-D-ribose 1-diphosphate (PRPP) to UMP and diphosphate. In Streptococcus thermophilus (strain CNRZ 1066), this protein is Uracil phosphoribosyltransferase.